A 318-amino-acid polypeptide reads, in one-letter code: MSLPIIVKWGGQEYSVTTLSEDDTVLDLKQFLKTLTGVLPERQKLLGLKVKGKPAENDVKLGALKLKPNTKIMMMGTREESLEDVLCPPPDNDDVINDFDIEDEVVEVENREENLLKISRRVKEYKVEVLNPPREGKKLLVLDVDYTLFDHRSCAETGVELMRPYLHEFLTSAYEDYDIVIWSATNMKWIEAKMKELGVSTNANYKITFMLDSAAMITVHTPRRGLIDVKPLGVIWGKFSEFYSKKNTIMFDDIGRNFLMNPQNGLKIRPFMKAHLNRDKDKELVKLTQYLKEIAKLDDFLELNHKYWERYLSKKQGQ.

One can recognise a Ubiquitin-like domain in the interval 3–81 (LPIIVKWGGQ…IMMMGTREES (79 aa)). Lys-117 is modified (N6-acetyllysine). The FCP1 homology domain occupies 133-294 (PREGKKLLVL…VKLTQYLKEI (162 aa)). Residues Asp-143, Asp-145, and Asp-253 each contribute to the Mg(2+) site.

The cofactor is Mg(2+).

It is found in the nucleus. It catalyses the reaction O-phospho-L-seryl-[protein] + H2O = L-seryl-[protein] + phosphate. The enzyme catalyses O-phospho-L-threonyl-[protein] + H2O = L-threonyl-[protein] + phosphate. Its function is as follows. Dephosphorylates 26S nuclear proteasomes, thereby decreasing their proteolytic activity. Recruited to the 19S regulatory particle of the 26S proteasome through its interaction with 19S component PSMD2/RPN1. Once recruited, dephosphorylates 19S component PSMC2/RPT1 which impairs PSMC2 ATPase activity and disrupts 26S proteasome assembly. Has also been reported to stimulate the proteolytic activity of the 26S proteasome. This chain is Ubiquitin-like domain-containing CTD phosphatase 1 (Ublcp1), found in Rattus norvegicus (Rat).